Here is a 98-residue protein sequence, read N- to C-terminus: NADH-ubiquinone oxidoreductase chain 4L (98 aa).

3 consecutive transmembrane segments (helical) span residues 1–21, 29–49, and 61–81; these read MTMV…GLLM, SLLC…VTIL, and IVLL…LVMV.

The protein belongs to the complex I subunit 4L family. In terms of assembly, core subunit of respiratory chain NADH dehydrogenase (Complex I) which is composed of 45 different subunits.

The protein resides in the mitochondrion inner membrane. The enzyme catalyses a ubiquinone + NADH + 5 H(+)(in) = a ubiquinol + NAD(+) + 4 H(+)(out). Functionally, core subunit of the mitochondrial membrane respiratory chain NADH dehydrogenase (Complex I) which catalyzes electron transfer from NADH through the respiratory chain, using ubiquinone as an electron acceptor. Part of the enzyme membrane arm which is embedded in the lipid bilayer and involved in proton translocation. The polypeptide is NADH-ubiquinone oxidoreductase chain 4L (MT-ND4L) (Monachus monachus (Mediterranean monk seal)).